A 314-amino-acid polypeptide reads, in one-letter code: Formimidoylglutamase (314 aa).

Residues H127, D153, H155, D157, D245, and D247 each coordinate Mn(2+).

This sequence belongs to the arginase family. Requires Mn(2+) as cofactor.

It catalyses the reaction N-formimidoyl-L-glutamate + H2O = formamide + L-glutamate. Its pathway is amino-acid degradation; L-histidine degradation into L-glutamate; L-glutamate from N-formimidoyl-L-glutamate (hydrolase route): step 1/1. Its function is as follows. Catalyzes the conversion of N-formimidoyl-L-glutamate to L-glutamate and formamide. This is Formimidoylglutamase from Aeromonas hydrophila subsp. hydrophila (strain ATCC 7966 / DSM 30187 / BCRC 13018 / CCUG 14551 / JCM 1027 / KCTC 2358 / NCIMB 9240 / NCTC 8049).